The sequence spans 66 residues: LYR motif-containing protein PHYPADRAFT_186863 (66 aa).

The protein belongs to the complex I LYR family. LYRM9 subfamily.

This is LYR motif-containing protein PHYPADRAFT_186863 from Physcomitrium patens (Spreading-leaved earth moss).